Consider the following 324-residue polypeptide: Anthranilate phosphoribosyltransferase (324 aa).

5-phospho-alpha-D-ribose 1-diphosphate contacts are provided by residues Gly-72, 75 to 76, Ser-80, 82 to 85, 99 to 107, and Ser-111; these read GD, NVST, and KHGNVSITS. Residue Gly-72 coordinates anthranilate. Ser-84 is a Mg(2+) binding site. An anthranilate-binding site is contributed by Asn-102. Arg-157 is an anthranilate binding site. Residues Asp-215 and Glu-216 each contribute to the Mg(2+) site.

Belongs to the anthranilate phosphoribosyltransferase family. In terms of assembly, homodimer. The cofactor is Mg(2+).

It carries out the reaction N-(5-phospho-beta-D-ribosyl)anthranilate + diphosphate = 5-phospho-alpha-D-ribose 1-diphosphate + anthranilate. It participates in amino-acid biosynthesis; L-tryptophan biosynthesis; L-tryptophan from chorismate: step 2/5. In terms of biological role, catalyzes the transfer of the phosphoribosyl group of 5-phosphorylribose-1-pyrophosphate (PRPP) to anthranilate to yield N-(5'-phosphoribosyl)-anthranilate (PRA). The sequence is that of Anthranilate phosphoribosyltransferase from Pyrococcus abyssi (strain GE5 / Orsay).